Consider the following 360-residue polypeptide: Histidinol-phosphate aminotransferase (360 aa).

Lysine 218 is modified (N6-(pyridoxal phosphate)lysine).

This sequence belongs to the class-II pyridoxal-phosphate-dependent aminotransferase family. Histidinol-phosphate aminotransferase subfamily. As to quaternary structure, homodimer. Requires pyridoxal 5'-phosphate as cofactor.

The enzyme catalyses L-histidinol phosphate + 2-oxoglutarate = 3-(imidazol-4-yl)-2-oxopropyl phosphate + L-glutamate. It participates in amino-acid biosynthesis; L-histidine biosynthesis; L-histidine from 5-phospho-alpha-D-ribose 1-diphosphate: step 7/9. In Pelagibacter ubique (strain HTCC1062), this protein is Histidinol-phosphate aminotransferase.